A 351-amino-acid polypeptide reads, in one-letter code: Modulator of apoptosis 1 (351 aa).

The short motif at 49–52 is the LIR element; sequence YRLL. Residues 120-127 are BH3-like; the sequence is LSRALGHE. The interval 202 to 205 is RASSF1-binding; that stretch reads KRRR.

Belongs to the PNMA family. Homodimer. Under normal circumstances, held in an inactive conformation by an intramolecular interaction. Interacts with BAX. Binding to RASSF1 isoform A (RASSF1A) relieves this inhibitory interaction and allows further binding to BAX. Also binds to BCL2 and BCLX. Recruited to the TNFRSF1A and TNFRSF10A complexes in response to their respective cognate ligand, after internalization. Interacts with TRIM39. Interacts with RASSF6. Interacts with ATG8 proteins MAP1LC3A, MAP1LC3B and MAP1LC3C. Does not interact with ATG8 proteins GABARAPL1, GABARAPL2 and GABARAP. Interacts with SQSTM1; promoting dissociation of SQSTM1 inclusion bodies that sequester KEAP1. Ubiquitinated and degraded during mitotic exit by APC/C-Cdh1, this modification is inhibited by TRIM39. In terms of tissue distribution, widely expressed, with high levels in heart and brain.

The protein resides in the cytoplasm. The protein localises to the cytosol. Its subcellular location is the mitochondrion outer membrane. It localises to the extracellular vesicle membrane. Functionally, retrotransposon-derived protein that forms virion-like capsids. Acts as an effector of BAX during apoptosis: enriched at outer mitochondria membrane and associates with BAX upon induction of apoptosis, facilitating BAX-dependent mitochondrial outer membrane permeabilization and apoptosis. Required for death receptor-dependent apoptosis. When associated with RASSF1, promotes BAX conformational change and translocation to mitochondrial membranes in response to TNF and TNFSF10 stimulation. Also promotes autophagy: promotes phagophore closure via association with ATG8 proteins. Acts as an inhibitor of the NFE2L2/NRF2 pathway via interaction with SQSTM1: interaction promotes dissociation of SQSTM1 inclusion bodies that sequester KEAP1, relieving inactivation of the BCR(KEAP1) complex. The protein is Modulator of apoptosis 1 of Homo sapiens (Human).